We begin with the raw amino-acid sequence, 200 residues long: Probable molybdenum cofactor guanylyltransferase (200 aa).

GTP is bound by residues 9 to 11 (LAG), lysine 21, aspartate 69, and aspartate 100. Aspartate 100 serves as a coordination point for Mg(2+).

This sequence belongs to the MobA family. Requires Mg(2+) as cofactor.

Its subcellular location is the cytoplasm. It carries out the reaction Mo-molybdopterin + GTP + H(+) = Mo-molybdopterin guanine dinucleotide + diphosphate. Its function is as follows. Transfers a GMP moiety from GTP to Mo-molybdopterin (Mo-MPT) cofactor (Moco or molybdenum cofactor) to form Mo-molybdopterin guanine dinucleotide (Mo-MGD) cofactor. The sequence is that of Probable molybdenum cofactor guanylyltransferase from Bacillus cereus (strain AH187).